We begin with the raw amino-acid sequence, 167 residues long: Phospholipase A2 imperatoxin-1 (167 aa).

Ca(2+) is bound by residues Trp-38, Gly-40, and Gly-42. 5 disulfide bridges follow: Cys-39/Cys-61, Cys-60/Cys-99, Cys-67/Cys-92, Cys-90/Cys-127, and Cys-132/Cys-144. Residue His-64 is part of the active site. Ca(2+) is bound at residue Asp-65. A glycan (N-linked (GlcNAc...) asparagine) is linked at Asn-102. A propeptide spanning residues 136 to 140 (RRLAR) is cleaved from the precursor.

This sequence belongs to the phospholipase A2 family. Group III subfamily. Heterodimer composed of a large subunit and a small subunit; disulfide-linked. Requires Ca(2+) as cofactor. In terms of tissue distribution, expressed by the venom gland.

It is found in the secreted. It catalyses the reaction a 1,2-diacyl-sn-glycero-3-phosphocholine + H2O = a 1-acyl-sn-glycero-3-phosphocholine + a fatty acid + H(+). In terms of biological role, phospholipase toxin, which may catalyze the calcium-dependent hydrolysis of the 2-acyl groups in 3-sn-phosphoglycerides. Inhibits both skeletal (RYR1) and cardiac (RYR2) ryanodine receptors (calcium release channels). Probably blocks ryanodine receptors by generating a lipid product. This is Phospholipase A2 imperatoxin-1 from Pandinus imperator (Emperor scorpion).